The chain runs to 332 residues: Isopentenyl-diphosphate delta-isomerase (332 aa).

6–7 contacts substrate; the sequence is RK. FMN is bound by residues 65-67, serine 95, and asparagine 123; that span reads AMT. 95–97 lines the substrate pocket; it reads SGR. Glutamine 157 is a binding site for substrate. Glutamate 158 contributes to the Mg(2+) binding site. FMN contacts are provided by residues lysine 187, threonine 217, 264–266, alanine 285, and 285–286; these read GVY and AR.

The protein belongs to the IPP isomerase type 2 family. Homooctamer. Dimer of tetramers. FMN serves as cofactor. It depends on NADPH as a cofactor. Mg(2+) is required as a cofactor.

It localises to the cytoplasm. It carries out the reaction isopentenyl diphosphate = dimethylallyl diphosphate. Competitively inhibited by N,N-dimethyl-2-amino-1-ethyl diphosphate (NIPP) and isopentyl diphosphate. Involved in the biosynthesis of isoprenoids. Catalyzes the 1,3-allylic rearrangement of the homoallylic substrate isopentenyl (IPP) to its allylic isomer, dimethylallyl diphosphate (DMAPP). The chain is Isopentenyl-diphosphate delta-isomerase from Thermus thermophilus (strain ATCC BAA-163 / DSM 7039 / HB27).